The primary structure comprises 1037 residues: Tyrosine-protein kinase-like otk (1037 aa).

The first 22 residues, 1–22 (MAALRISVWILVQALMMALVSS), serve as a signal peptide directing secretion. N-linked (GlcNAc...) asparagine glycans are attached at residues Asn-23 and Asn-39. The Extracellular portion of the chain corresponds to 23-582 (NSSHFLQLPQ…GGDGFLVTRA (560 aa)). 5 Ig-like C2-type domains span residues 25–115 (SHFL…AKLS), 114–200 (LSVI…RVMS), 252–366 (PEDL…APIN), 369–464 (PGTL…VAIN), and 469–559 (PKFS…VQLV). Cystine bridges form between Cys-46/Cys-96, Cys-138/Cys-189, Cys-277/Cys-355, and Cys-400/Cys-448. Residues Asn-337, Asn-418, Asn-430, Asn-445, Asn-458, Asn-513, and Asn-525 are each glycosylated (N-linked (GlcNAc...) asparagine). A disulfide bridge connects residues Cys-491 and Cys-543. A helical membrane pass occupies residues 583–603 (VLITMTVALAYIVLVVGLMLW). Residues 604-1037 (CRYRRQARKA…LSKAMQSLEK (434 aa)) are Cytoplasmic-facing. 2 disordered regions span residues 618–681 (LSTK…KKSA) and 719–764 (ATGS…KTSM). Positions 653 to 675 (QSRSKSNGDAQKSDDTACSQQSR) are enriched in polar residues. Ser-680 carries the post-translational modification Phosphoserine. The Protein kinase; inactive domain occupies 694–1035 (LTELIQIGRG…AALSKAMQSL (342 aa)). Over residues 724–735 (SDKDADTEKQHS) the composition is skewed to basic and acidic residues.

This sequence belongs to the protein kinase superfamily. Tyr protein kinase family. Insulin receptor subfamily. As to quaternary structure, interacts with plexA; component of a receptor complex that mediates the repulsive signaling in response to Semaphorin ligands.

It localises to the cell membrane. Functionally, acts as a calcium-dependent, homophilic cell adhesion molecule that regulates neural recognition during the development of the nervous system. Component of the repulsive Plexin signaling response to regulate motor axon guidance at the embryonic stage. Also component of a receptor complex that is required in the adult visual system to innervate the lamina layer; specific targeting of R1-R6 axons. This is Tyrosine-protein kinase-like otk from Drosophila ananassae (Fruit fly).